The following is a 244-amino-acid chain: Dihydropteridine reductase (244 aa).

Alanine 2 bears the N-acetylalanine mark. Residue 14–38 participates in NADP(+) binding; it reads LVYGGRGALGSRCVQAFRARNWWVA. 4 positions are modified to N6-succinyllysine: lysine 73, lysine 79, lysine 96, and lysine 102. Tyrosine 150 acts as the Proton acceptor in catalysis.

This sequence belongs to the short-chain dehydrogenases/reductases (SDR) family. As to quaternary structure, homodimer.

It carries out the reaction 5,6,7,8-tetrahydropteridine + NAD(+) = 6,7-dihydropteridine + NADH + H(+). The enzyme catalyses 5,6,7,8-tetrahydropteridine + NADP(+) = 6,7-dihydropteridine + NADPH + H(+). Catalyzes the conversion of quinonoid dihydrobiopterin into tetrahydrobiopterin. This chain is Dihydropteridine reductase (QDPR), found in Homo sapiens (Human).